A 232-amino-acid polypeptide reads, in one-letter code: PsbP domain-containing protein 2, chloroplastic (232 aa).

The N-terminal 34 residues, 1 to 34 (MWSQSFLGSAPKLCLFSSSLPPFSHHKIHKFFCF), are a transit peptide targeting the chloroplast. The transit peptide at 35–71 (AQNPSSTVSINLSKRHLNLSILTLFFNGFLLDNKAKS) directs the protein to the thylakoid.

It belongs to the PsbP family.

The protein resides in the plastid. The protein localises to the chloroplast thylakoid lumen. The chain is PsbP domain-containing protein 2, chloroplastic (PPD2) from Arabidopsis thaliana (Mouse-ear cress).